Consider the following 324-residue polypeptide: Glyoxylate/hydroxypyruvate reductase B (324 aa).

Active-site residues include Arg-237 and Glu-266. The active-site Proton donor is the His-285.

It belongs to the D-isomer specific 2-hydroxyacid dehydrogenase family. GhrB subfamily. In terms of assembly, homodimer.

Its subcellular location is the cytoplasm. The enzyme catalyses glycolate + NADP(+) = glyoxylate + NADPH + H(+). The catalysed reaction is (R)-glycerate + NAD(+) = 3-hydroxypyruvate + NADH + H(+). It carries out the reaction (R)-glycerate + NADP(+) = 3-hydroxypyruvate + NADPH + H(+). In terms of biological role, catalyzes the NADPH-dependent reduction of glyoxylate and hydroxypyruvate into glycolate and glycerate, respectively. The polypeptide is Glyoxylate/hydroxypyruvate reductase B (Shigella boydii serotype 18 (strain CDC 3083-94 / BS512)).